The following is a 392-amino-acid chain: FK506-binding protein 4 (392 aa).

Disordered stretches follow at residues 58–116 (NPEL…NEID) and 161–284 (GNYV…PKTK). Acidic residues-rich tracts occupy residues 73–86 (DGLE…EQEA), 104–116 (SESE…NEID), and 172–219 (SDSD…DASD). A phosphoserine mark is found at Ser-80 and Ser-82. Basic and acidic residues-rich tracts occupy residues 220–234 (IESR…DEKK) and 252–279 (SAKP…ESKP). The 87-residue stretch at 306-392 (GTRVGMRYVG…TFDVKLVSMK (87 aa)) folds into the PPIase FKBP-type domain.

This sequence belongs to the FKBP-type PPIase family. FKBP3/4 subfamily. As to quaternary structure, binds to histones H3 and H4. Interacts with NOP53.

The protein resides in the nucleus. It catalyses the reaction [protein]-peptidylproline (omega=180) = [protein]-peptidylproline (omega=0). Functionally, PPIase that acts as a histone chaperone. Histone proline isomerase that increases the rate of cis-trans isomerization at 'Pro-17' (H3P16), 'Pro-31' (H3P30) and 'Pro-39 (H3P38) on the histone H3 N-terminal tail. H3P16 and H3P30 are the major proline targets with little activity shown against H3P38. H3P38 isomerization influences SET2-mediated H3K36 methylation thereby regulating gene expression. The protein is FK506-binding protein 4 of Saccharomyces cerevisiae (strain ATCC 204508 / S288c) (Baker's yeast).